We begin with the raw amino-acid sequence, 241 residues long: Probable transcriptional regulatory protein azo0574 (241 aa).

The disordered stretch occupies residues 1–21 (MAGHSKWANIQHRKGRQDAKR).

The protein belongs to the TACO1 family.

The protein resides in the cytoplasm. This chain is Probable transcriptional regulatory protein azo0574, found in Azoarcus sp. (strain BH72).